Consider the following 48-residue polypeptide: DNA gyrase inhibitor YacG (48 aa).

The Zn(2+) site is built by Cys9, Cys12, Cys28, and Cys32.

Belongs to the DNA gyrase inhibitor YacG family. Interacts with GyrB. Zn(2+) is required as a cofactor.

Its function is as follows. Inhibits all the catalytic activities of DNA gyrase by preventing its interaction with DNA. Acts by binding directly to the C-terminal domain of GyrB, which probably disrupts DNA binding by the gyrase. In Wigglesworthia glossinidia brevipalpis, this protein is DNA gyrase inhibitor YacG.